Consider the following 152-residue polypeptide: Acidic phospholipase A2 S16-19 (152 aa).

The N-terminal stretch at 1 to 19 is a signal peptide; that stretch reads MYPAHLLVLLAVCVSLLGA. Residues 20 to 27 constitute a propeptide that is removed on maturation; the sequence is SNIPLPSL. 6 cysteine pairs are disulfide-bonded: cysteine 38–cysteine 104, cysteine 54–cysteine 151, cysteine 71–cysteine 132, cysteine 78–cysteine 125, cysteine 88–cysteine 118, and cysteine 111–cysteine 123. Ca(2+) is bound by residues tyrosine 55, glycine 57, and glycine 59. Histidine 75 is an active-site residue. Residue aspartate 76 coordinates Ca(2+). Aspartate 126 is an active-site residue.

The protein belongs to the phospholipase A2 family. Group I subfamily. D49 sub-subfamily. The cofactor is Ca(2+). In terms of processing, this enzyme lacks one of the seven disulfide bonds found in similar PLA2 proteins. Expressed by the venom gland.

The protein resides in the secreted. The enzyme catalyses a 1,2-diacyl-sn-glycero-3-phosphocholine + H2O = a 1-acyl-sn-glycero-3-phosphocholine + a fatty acid + H(+). In terms of biological role, snake venom phospholipase A2 (PLA2) that inhibits collagen-induced platelet aggregation. PLA2 catalyzes the calcium-dependent hydrolysis of the 2-acyl groups in 3-sn-phosphoglycerides. The sequence is that of Acidic phospholipase A2 S16-19 from Austrelaps superbus (Lowland copperhead snake).